Consider the following 153-residue polypeptide: Mitochondrial import inner membrane translocase subunit TIM14 (153 aa).

Residues 1–43 (MDGTGISDGSSVTGDAAAGFPAGATQAPGSKQGMDLYFDNALQ) lie on the Mitochondrial intermembrane side of the membrane. Residues 44–66 (YMGEHPVLAGVGGFLALYVGAGV) traverse the membrane as a helical segment. Topologically, residues 67–153 (YKGVQTRLNG…FLEKKGIVRK (87 aa)) are mitochondrial matrix. Residues 96-153 (EALQILNLKENNLTTKKLKEVHRKIMLANHPDKGGSPYLATKINEAKDFLEKKGIVRK) enclose the J domain.

This sequence belongs to the TIM14 family. As to quaternary structure, heterodimer with PAM16. Component of the PAM complex, at least composed of mtHsp70, MGE1, TIM44, PAM16, PAM17 and PAM18.

It localises to the mitochondrion inner membrane. In terms of biological role, essential component of the PAM complex, a complex required for the translocation of transit peptide-containing proteins from the inner membrane into the mitochondrial matrix in an ATP-dependent manner. In the complex, it is required to stimulate activity of mtHSP70 (SSC1). The chain is Mitochondrial import inner membrane translocase subunit TIM14 (PAM18) from Candida glabrata (strain ATCC 2001 / BCRC 20586 / JCM 3761 / NBRC 0622 / NRRL Y-65 / CBS 138) (Yeast).